Consider the following 351-residue polypeptide: Foldase protein PrsA 1 (351 aa).

Residues methionine 1 to alanine 22 form the signal peptide. Residue cysteine 23 is the site of N-palmitoyl cysteine attachment. A lipid anchor (S-diacylglycerol cysteine) is attached at cysteine 23. In terms of domain architecture, PpiC spans threonine 145–lysine 240. Composition is skewed to low complexity over residues lysine 303–serine 317 and glutamate 326–glutamine 351. The segment at lysine 303–glutamine 351 is disordered.

The protein belongs to the PrsA family.

The protein localises to the cell membrane. It carries out the reaction [protein]-peptidylproline (omega=180) = [protein]-peptidylproline (omega=0). Plays a major role in protein secretion by helping the post-translocational extracellular folding of several secreted proteins. This Streptococcus pyogenes serotype M6 (strain ATCC BAA-946 / MGAS10394) protein is Foldase protein PrsA 1.